A 320-amino-acid polypeptide reads, in one-letter code: uncharacterized protein (320 aa).

Arg61 carries the post-translational modification Omega-N-methylarginine. A disordered region spans residues 299 to 320 (LHLQHQKQTSKDAGRQTPERKA). Residues 307-320 (TSKDAGRQTPERKA) are compositionally biased toward basic and acidic residues. Residue Thr315 is modified to Phosphothreonine.

This is an uncharacterized protein from Mus musculus (Mouse).